The following is a 141-amino-acid chain: Cystatin (141 aa).

A signal peptide spans 1 to 26 (MLHSQLPVAAPLRLLCALLLLPSVTM). Residues 29 to 129 (GGLSPRSVTD…CRFQVWSRPW (101 aa)) form the Cystatin domain. Positions 73–77 (QVVTG) match the Secondary area of contact motif. 2 disulfide bridges follow: C91/C107 and C120/C140.

Belongs to the cystatin family. In terms of tissue distribution, expressed at a low level by the venom gland (at protein level).

It localises to the secreted. Inhibits various C1 cysteine proteases including cathepsin L, papain and cathepsin B. This protein has no toxic activity and its function in the venom is unknown. It may play a role as a housekeeping or regulatory protein. The chain is Cystatin from Hoplocephalus stephensii (Stephens's banded snake).